Consider the following 1728-residue polypeptide: U3 small nucleolar RNA-associated protein 10 (1728 aa).

HEAT repeat units lie at residues 540-578 (DKDFQAIIPYCAVALSDPAKKVRRAAADLIAVLGSLVKE), 881-926 (PANH…MMPA), 986-1024 (FMGSSEVIPPLIDTFRRRGRNVVASTKDLLASFVTAYEH), 1191-1229 (LLSIAEFIKSVEALLDRPNVGLRQKVLRALELRVDSEST), 1235-1274 (REALLAFLPQLTAVIRESDDMSYKHTAVTCVDKISEKYGK), 1622-1662 (ADAT…GQAA), and 1683-1721 (LQALPEMLPYISELQDDDDEVVERENRRWIVEIEEKLGE).

The protein belongs to the HEATR1/UTP10 family. Component of the ribosomal small subunit (SSU) processome.

The protein resides in the nucleus. The protein localises to the nucleolus. Involved in nucleolar processing of pre-18S ribosomal RNA. Involved in ribosome biosynthesis. This Chaetomium globosum (strain ATCC 6205 / CBS 148.51 / DSM 1962 / NBRC 6347 / NRRL 1970) (Soil fungus) protein is U3 small nucleolar RNA-associated protein 10.